Consider the following 362-residue polypeptide: Dual-specificity RNA methyltransferase RlmN (362 aa).

Catalysis depends on glutamate 100, which acts as the Proton acceptor. A Radical SAM core domain is found at 106-345 (EPDRNTLCIS…VFIRNSRGED (240 aa)). The cysteines at positions 113 and 350 are disulfide-linked. 3 residues coordinate [4Fe-4S] cluster: cysteine 120, cysteine 124, and cysteine 127. Residues 177 to 178 (GE), serine 209, 231 to 233 (SLH), and asparagine 307 contribute to the S-adenosyl-L-methionine site. Residue cysteine 350 is the S-methylcysteine intermediate of the active site.

It belongs to the radical SAM superfamily. RlmN family. Requires [4Fe-4S] cluster as cofactor.

The protein resides in the cytoplasm. It catalyses the reaction adenosine(2503) in 23S rRNA + 2 reduced [2Fe-2S]-[ferredoxin] + 2 S-adenosyl-L-methionine = 2-methyladenosine(2503) in 23S rRNA + 5'-deoxyadenosine + L-methionine + 2 oxidized [2Fe-2S]-[ferredoxin] + S-adenosyl-L-homocysteine. The enzyme catalyses adenosine(37) in tRNA + 2 reduced [2Fe-2S]-[ferredoxin] + 2 S-adenosyl-L-methionine = 2-methyladenosine(37) in tRNA + 5'-deoxyadenosine + L-methionine + 2 oxidized [2Fe-2S]-[ferredoxin] + S-adenosyl-L-homocysteine. In terms of biological role, specifically methylates position 2 of adenine 2503 in 23S rRNA and position 2 of adenine 37 in tRNAs. m2A2503 modification seems to play a crucial role in the proofreading step occurring at the peptidyl transferase center and thus would serve to optimize ribosomal fidelity. The sequence is that of Dual-specificity RNA methyltransferase RlmN from Desulfotalea psychrophila (strain LSv54 / DSM 12343).